Here is a 216-residue protein sequence, read N- to C-terminus: GTP cyclohydrolase-2 (216 aa).

Residue 51 to 55 (RIHSE) participates in GTP binding. 3 residues coordinate Zn(2+): Cys-56, Cys-67, and Cys-69. GTP is bound by residues Gln-72, 94-96 (EGR), and Thr-116. The active-site Proton acceptor is Asp-128. Arg-130 (nucleophile) is an active-site residue. Residues Thr-151 and Lys-156 each contribute to the GTP site.

This sequence belongs to the GTP cyclohydrolase II family. Zn(2+) is required as a cofactor.

It carries out the reaction GTP + 4 H2O = 2,5-diamino-6-hydroxy-4-(5-phosphoribosylamino)-pyrimidine + formate + 2 phosphate + 3 H(+). It participates in cofactor biosynthesis; riboflavin biosynthesis; 5-amino-6-(D-ribitylamino)uracil from GTP: step 1/4. In terms of biological role, catalyzes the conversion of GTP to 2,5-diamino-6-ribosylamino-4(3H)-pyrimidinone 5'-phosphate (DARP), formate and pyrophosphate. The protein is GTP cyclohydrolase-2 of Haemophilus influenzae (strain 86-028NP).